The chain runs to 152 residues: Probable spermine N(1)-acetyltransferase (152 aa).

Positions Ile3–Leu152 constitute an N-acetyltransferase domain. Residues Phe82–Ile84, Gln89–Lys95, and Asn122–Arg131 contribute to the acetyl-CoA site. Tyr129 functions as the Proton donor in the catalytic mechanism.

This sequence belongs to the acetyltransferase family.

The enzyme catalyses an alkane-alpha,omega-diamine + acetyl-CoA = an N-acetylalkane-alpha,omega-diamine + CoA + H(+). It carries out the reaction spermine + acetyl-CoA = N(1)-acetylspermine + CoA + H(+). It functions in the pathway amine and polyamine degradation; spermine degradation. Its function is as follows. Probably acetylates spermine to N(1)-acetylspermine. The sequence is that of Probable spermine N(1)-acetyltransferase from Bacillus subtilis subsp. natto (strain BEST195).